Reading from the N-terminus, the 311-residue chain is MTMRVTFLGTSGAVPTTQRNTSSIFVNRDGDYLLFDCGEGTQRQMMRYGTGFAIDHLFVTHLHGDHVLGIPGLLQTWDFNERERAIAIHTPAGTRGNIKQLIQANGTTPSFPVRINEVSAGDVVLDRSEYEIRAIETAHRCASVGYVLDEDDRKGKFDREKAEEEFGIPPGPKYSKLHRGEAVEHEGETIQPEAVVGPARPGRRFVYTGDTLPTESVIEASEDADLLVHDATFAEDRKERAKATAHSTAREAADVARQAGASTLALTHISTRYAASADELVDEARDAFDGEVVLAEDGMERRVEFPDADEY.

Zn(2+) is bound by residues His-61, His-63, Asp-65, His-66, His-139, Asp-210, and His-268. The active-site Proton acceptor is the Asp-65.

This sequence belongs to the RNase Z family. In terms of assembly, homodimer. Zn(2+) is required as a cofactor.

The catalysed reaction is Endonucleolytic cleavage of RNA, removing extra 3' nucleotides from tRNA precursor, generating 3' termini of tRNAs. A 3'-hydroxy group is left at the tRNA terminus and a 5'-phosphoryl group is left at the trailer molecule.. Its function is as follows. Zinc phosphodiesterase, which displays some tRNA 3'-processing endonuclease activity. Probably involved in tRNA maturation, by removing a 3'-trailer from precursor tRNA. In Haloarcula marismortui (strain ATCC 43049 / DSM 3752 / JCM 8966 / VKM B-1809) (Halobacterium marismortui), this protein is Ribonuclease Z.